The following is a 284-amino-acid chain: Pantothenate synthetase (284 aa).

30–37 (MGNLHEGH) provides a ligand contact to ATP. The Proton donor role is filled by H37. Q61 contributes to the (R)-pantoate binding site. A beta-alanine-binding site is contributed by Q61. An ATP-binding site is contributed by 149–152 (GEKD). (R)-pantoate is bound at residue Q155. ATP-binding positions include V178 and 186–189 (LSSR).

Belongs to the pantothenate synthetase family. As to quaternary structure, homodimer.

Its subcellular location is the cytoplasm. The enzyme catalyses (R)-pantoate + beta-alanine + ATP = (R)-pantothenate + AMP + diphosphate + H(+). It functions in the pathway cofactor biosynthesis; (R)-pantothenate biosynthesis; (R)-pantothenate from (R)-pantoate and beta-alanine: step 1/1. Functionally, catalyzes the condensation of pantoate with beta-alanine in an ATP-dependent reaction via a pantoyl-adenylate intermediate. This Sodalis glossinidius (strain morsitans) protein is Pantothenate synthetase.